We begin with the raw amino-acid sequence, 421 residues long: Putative hydro-lyase KRH_21160 (421 aa).

Disordered stretches follow at residues 200-298 (TWGH…SPVT) and 312-421 (TRAG…AVSR). Over residues 224–237 (GSRRRPRWWSRLRR) the composition is skewed to basic residues. 2 stretches are compositionally biased toward low complexity: residues 243–260 (PRAT…TRCP) and 370–380 (SRGPGPCPRAA).

The protein belongs to the D-glutamate cyclase family.

The chain is Putative hydro-lyase KRH_21160 from Kocuria rhizophila (strain ATCC 9341 / DSM 348 / NBRC 103217 / DC2201).